Here is a 444-residue protein sequence, read N- to C-terminus: tRNA modification GTPase MnmE (444 aa).

(6S)-5-formyl-5,6,7,8-tetrahydrofolate is bound by residues Arg-23, Glu-82, and Lys-121. Positions 216-365 (GTSIVLAGLP…LKQALQKWLN (150 aa)) constitute a TrmE-type G domain. Position 226 (Asn-226) interacts with K(+). GTP-binding positions include 226-231 (NAGKSS), 245-251 (TDIPGTT), and 270-273 (DSAG). Residue Ser-230 coordinates Mg(2+). Residues Thr-245, Ile-247, and Thr-250 each contribute to the K(+) site. Position 251 (Thr-251) interacts with Mg(2+). Lys-444 contributes to the (6S)-5-formyl-5,6,7,8-tetrahydrofolate binding site.

It belongs to the TRAFAC class TrmE-Era-EngA-EngB-Septin-like GTPase superfamily. TrmE GTPase family. As to quaternary structure, homodimer. Heterotetramer of two MnmE and two MnmG subunits. K(+) serves as cofactor.

The protein resides in the cytoplasm. Exhibits a very high intrinsic GTPase hydrolysis rate. Involved in the addition of a carboxymethylaminomethyl (cmnm) group at the wobble position (U34) of certain tRNAs, forming tRNA-cmnm(5)s(2)U34. The polypeptide is tRNA modification GTPase MnmE (Chlamydia trachomatis serovar L2 (strain ATCC VR-902B / DSM 19102 / 434/Bu)).